We begin with the raw amino-acid sequence, 67 residues long: uncharacterized protein (67 aa).

Residues 17–47 (AASLQELEKKINTQIENNKAIMLRVKSVSHQ) adopt a coiled-coil conformation.

This is an uncharacterized protein from Bacillus subtilis (strain 168).